Consider the following 340-residue polypeptide: Ava biosynthesis cluster protein G (340 aa).

4 helical membrane passes run 15–35 (WSAFWLWAIIGGYFAAFNIWN), 81–101 (FMISTDFITSACSVIALLQFV), 118–138 (AFFVMMGFGAPSGIMVAVHAF), and 148–168 (LSIMLTGVLTICFLATSFLCI). Asparagine 171 is a glycosylation site (N-linked (GlcNAc...) asparagine). Transmembrane regions (helical) follow at residues 219 to 239 (FSSVYLIIPEVMNWTLGYVAF) and 315 to 335 (SALTAVCLLLRYVGLILWLQI).

It localises to the membrane. It participates in secondary metabolite biosynthesis. Part of the cluster that mediates the biosynthesis of a highly modified cyclo-arginine-tryptophan dipeptide (cRW). The first step of the pathway is perfornmed by the arginine-containing cyclodipeptide synthase (RCPDS) avaA that acts as the scaffold-generating enzyme and is responsible for formation of the cyclo-Arg-Trp (cRW) diketopiperazine. AvaB then acts as a multifunctional flavoenzyme that is responsible for generating the cyclo-Arg-formylkynurenine DKP, which can be deformylated by avaC. AvaB then further catalyzes an additional N-oxidation followed by cyclization and dehydration. The next step is an N-acetylation of the guanidine group catalyzed by the arginine N-acetyltransferase avaD. The roles of the additional enzymes identified within the ava cluster still have to be determined. This is Ava biosynthesis cluster protein G from Aspergillus versicolor.